Reading from the N-terminus, the 100-residue chain is Urease subunit gamma (100 aa).

Belongs to the urease gamma subunit family. In terms of assembly, heterotrimer of UreA (gamma), UreB (beta) and UreC (alpha) subunits. Three heterotrimers associate to form the active enzyme.

It localises to the cytoplasm. The catalysed reaction is urea + 2 H2O + H(+) = hydrogencarbonate + 2 NH4(+). Its pathway is nitrogen metabolism; urea degradation; CO(2) and NH(3) from urea (urease route): step 1/1. The protein is Urease subunit gamma of Prochlorococcus marinus (strain MIT 9312).